We begin with the raw amino-acid sequence, 188 residues long: Probable nicotinate-nucleotide adenylyltransferase (188 aa).

The protein belongs to the NadD family.

It catalyses the reaction nicotinate beta-D-ribonucleotide + ATP + H(+) = deamido-NAD(+) + diphosphate. Its pathway is cofactor biosynthesis; NAD(+) biosynthesis; deamido-NAD(+) from nicotinate D-ribonucleotide: step 1/1. Its function is as follows. Catalyzes the reversible adenylation of nicotinate mononucleotide (NaMN) to nicotinic acid adenine dinucleotide (NaAD). In Solibacter usitatus (strain Ellin6076), this protein is Probable nicotinate-nucleotide adenylyltransferase.